We begin with the raw amino-acid sequence, 430 residues long: Adenylosuccinate synthetase (430 aa).

GTP contacts are provided by residues 12–18 and 40–42; these read GDEGKGK and GHT. The active-site Proton acceptor is Asp13. Mg(2+) contacts are provided by Asp13 and Gly40. IMP-binding positions include 13–16, 38–41, Thr130, Arg144, Gln224, Thr239, and Arg303; these read DEGK and NAGH. The Proton donor role is filled by His41. 299–305 is a substrate binding site; that stretch reads VVTGRKR. GTP contacts are provided by residues Arg305, 331 to 333, and 413 to 415; these read KLD and STS.

It belongs to the adenylosuccinate synthetase family. Homodimer. It depends on Mg(2+) as a cofactor.

The protein resides in the cytoplasm. The catalysed reaction is IMP + L-aspartate + GTP = N(6)-(1,2-dicarboxyethyl)-AMP + GDP + phosphate + 2 H(+). It participates in purine metabolism; AMP biosynthesis via de novo pathway; AMP from IMP: step 1/2. Plays an important role in the de novo pathway of purine nucleotide biosynthesis. Catalyzes the first committed step in the biosynthesis of AMP from IMP. This chain is Adenylosuccinate synthetase, found in Methylobacterium sp. (strain 4-46).